We begin with the raw amino-acid sequence, 134 residues long: Profilin-4 (134 aa).

Cys13 and Cys118 form a disulfide bridge. An Involved in PIP2 interaction motif is present at residues 84–100; it reads AVIRGKKGSGGITIKKT. Phosphothreonine is present on Thr114.

Belongs to the profilin family. Occurs in many kinds of cells as a complex with monomeric actin in a 1:1 ratio. Post-translationally, phosphorylated by MAP kinases.

It is found in the cytoplasm. Its subcellular location is the cytoskeleton. Binds to actin and affects the structure of the cytoskeleton. At high concentrations, profilin prevents the polymerization of actin, whereas it enhances it at low concentrations. The chain is Profilin-4 from Olea europaea (Common olive).